The chain runs to 530 residues: MSAKEKFTSLSPAEFFKRNPELAGFPNPARALYQTVRELIENSLDATDVHGILPNIKITIDLIDDARQIYKVNVVDNGIGIPPQEVPNAFGRVLYSSKYVNRQTRGMYGLGVKAAVLYSQMHQDKPIEIETSPVNSKRIYTFKLKIDINKNEPIIVERGSVENTRGFHGTSVAISIPGDWPKAKSRIYEYIKRTYIITPYAEFIFKDPEGNVTYYPRLTNKIPKPPQEVKPHPYGVDREEIKILINNLKRDYTIKEFLVNEFQSIGDTTADKILELAGLKPNKKVKNLTEEEITRLVETFKKYEDFRSPSADSLSVIGEDLIELGLKKIFNPDFAASITRKPKAYQGHPFIVEAGVAFGGSIPVGEEPIVLRYANKIPLIYDEKSDVIWKVVEELDWKRYGIESDQYQMVVMVHLCSTKIPYKSAGKESIAEVEDIEKEIKNALMEVARKLKQYLSEKRKEQEAKKKLLAYLKYIPEVSRSLATFLASGNKELVSKYQNEISEGLFKLISKKLDLINIEEYRKVYRVDSE.

Residues N42, D76, 96 to 98 (SSK), 107 to 113 (MYGLGVK), and K427 each bind ATP.

This sequence belongs to the TOP6B family. As to quaternary structure, homodimer. Heterotetramer of two Top6A and two Top6B chains.

The catalysed reaction is ATP-dependent breakage, passage and rejoining of double-stranded DNA.. Not inhibited by the DNA gyrase inhibitor novobiocin, instead inhibited by eukaryotic topoisomerase inhibitors such as m- and o-amsacrine, ellipticine, and the quinolone CP-115,953. Radicicol inhibits the ATPase activity. Functionally, relaxes both positive and negative supercoils and exhibits a strong decatenase and unknotting activity; it cannot introduce DNA supercoils. ATP is absolutely required for DNA cleavage; the nonhydrolyzable analog AMP-PNP generates nicked or linear products from a supercoiled dsDNA substrate. Generates staggered two-nucleotide long 5' overhangs. The enzyme is covalently attached transiently to the 5'-ends of the cleaved strands. This chain is Type 2 DNA topoisomerase 6 subunit B, found in Saccharolobus shibatae (strain ATCC 51178 / DSM 5389 / JCM 8931 / NBRC 15437 / B12) (Sulfolobus shibatae).